The chain runs to 517 residues: Alpha-amylase (517 aa).

Positions 1–21 are cleaved as a signal peptide; the sequence is MAHLLLAVVAITLALSQSVFG. The cysteines at positions 52 and 108 are disulfide-linked. Ca(2+) contacts are provided by Asn122, Arg178, and Asp187. Residue Arg215 participates in chloride binding. Catalysis depends on Asp217, which acts as the Nucleophile. His221 contributes to the Ca(2+) binding site. Glu253 acts as the Proton donor in catalysis. Arg355 lines the chloride pocket. 2 disulfide bridges follow: Cys397–Cys403 and Cys470–Cys482.

Belongs to the glycosyl hydrolase 13 family. Monomer. Ca(2+) serves as cofactor. The cofactor is chloride.

It is found in the secreted. It carries out the reaction Endohydrolysis of (1-&gt;4)-alpha-D-glucosidic linkages in polysaccharides containing three or more (1-&gt;4)-alpha-linked D-glucose units.. Activated by chloride ions. Inhibited by acarbose. Not inhibited by wheat alpha-amylase inhibitors 1 (WI-1, the tetrameric form) or 3 (WI-3, the monomeric form) and bean alpha-amylase inhibitor 1 (alphaAI-1). The protein is Alpha-amylase of Acarus siro (Flour mite).